Reading from the N-terminus, the 111-residue chain is Prothymosin alpha-A (111 aa).

The interval Met1 to Asp111 is disordered. A compositionally biased stretch (basic and acidic residues) spans Ser9–Asn42. Composition is skewed to acidic residues over residues Glu43–Glu81 and Glu90–Val100. Residues Glu101–Asp111 show a composition bias toward basic and acidic residues.

It belongs to the pro/parathymosin family.

It is found in the nucleus. This Xenopus laevis (African clawed frog) protein is Prothymosin alpha-A (ptma-a).